The sequence spans 520 residues: Poly(A)-specific ribonuclease PNLDC1 (520 aa).

Mg(2+)-binding residues include Asp-17, Glu-19, Asp-260, and Asp-354. Residues 497 to 513 (CLLQVCGIVTAWALLAF) traverse the membrane as a helical segment.

It belongs to the CAF1 family. Requires Mg(2+) as cofactor.

The protein localises to the endoplasmic reticulum membrane. It catalyses the reaction Exonucleolytic cleavage of poly(A) to 5'-AMP.. Functionally, 3'-exoribonuclease that has a preference for poly(A) tails of mRNAs, thereby efficiently degrading poly(A) tails. Exonucleolytic degradation of the poly(A) tail is often the first step in the decay of eukaryotic mRNAs and is also used to silence certain maternal mRNAs translationally during oocyte maturation and early embryonic development. May act as a regulator of multipotency in embryonic stem cells. Is a critical factor for proper spermatogenesis, involved in pre-piRNAs processing to generate mature piRNAs. The polypeptide is Poly(A)-specific ribonuclease PNLDC1 (Pongo abelii (Sumatran orangutan)).